Here is a 447-residue protein sequence, read N- to C-terminus: Tektin-4 (447 aa).

Coiled coils occupy residues 114–143, 324–348, and 375–423; these read KSEL…RALD, KILS…DKEA, and FRLM…TNSL.

It belongs to the tektin family. In terms of assembly, microtubule inner protein component of sperm flagellar doublet microtubules. Post-translationally, ubiquitinated, leading to its degradation. Deubiquitinated by USP16, promoting its stability.

It is found in the cytoplasm. The protein resides in the cytoskeleton. The protein localises to the cilium axoneme. Its subcellular location is the flagellum axoneme. Its function is as follows. Microtubule inner protein (MIP) part of the dynein-decorated doublet microtubules (DMTs) in cilia and flagellar axoneme. Forms filamentous polymers in the walls of ciliary and flagellar microtubules. Contributes to normal sperm motility. The sequence is that of Tektin-4 (Tekt4) from Rattus norvegicus (Rat).